We begin with the raw amino-acid sequence, 448 residues long: Protein chibby homolog 2 (448 aa).

8 positions are modified to phosphoserine: serine 41, serine 86, serine 89, serine 97, serine 124, serine 144, serine 148, and serine 150. Positions 164 to 198 form a coiled coil; it reads KECMLQEENKSLREENKALREENRMLSKENKILQV. Phosphoserine is present on residues serine 212 and serine 225. The stretch at 242-267 forms a coiled coil; sequence KEDSTLQLLREENRALQQLLEQKQAY. Residues 270-323 form a disordered region; it reads QAEDTAAPAEESKPAPSPHEEPCSPGLLQDQGSGLSSRFEEPKGPPARQEDSKE. 2 stretches are compositionally biased toward basic and acidic residues: residues 279–291 and 307–323; these read EESKPAPSPHEEP and RFEEPKGPPARQEDSKE. Serine 335 and serine 338 each carry phosphoserine. Positions 356 to 414 form a coiled coil; the sequence is LQLLREMRQALQALLKENRLLQEENRTLQVLRAEHRGFQEENKALWENNKLKLQQKLVI.

It belongs to the chibby family. SPERT subfamily. Homodimer. Binds to NEK1. As to expression, testis-specific.

This Homo sapiens (Human) protein is Protein chibby homolog 2.